Reading from the N-terminus, the 177-residue chain is Immunity protein CdiI-YPIII (177 aa).

Interacts with the C-terminal DNase fragment (residues 954-1077) of cognate toxin CdiA-YPIII.

In terms of biological role, immunity protein component of a toxin-immunity protein module, which functions as a cellular contact-dependent growth inhibition (CDI) system. CDI modules allow bacteria to communicate with and inhibit the growth of closely related neighboring bacteria in a contact-dependent fashion. Neutralizes the toxic activity of cognate toxin CdiA-YPIII (residues 954-1077). Does not inhibit toxic activity of CdiA from other toxin-immunity modules. This is Immunity protein CdiI-YPIII from Yersinia pseudotuberculosis serotype O:3 (strain YPIII).